The primary structure comprises 384 residues: Cyanate transport protein CynX (384 aa).

Helical transmembrane passes span 3 to 23 (LVLVLIGLNMRPLLTSVGPLL), 34 to 54 (FSVAALLTALPVVTMGGLALA), 68 to 88 (VAISLLLIAVGALMRELYPQS), 89 to 109 (ALLLSSALLGGVGIGIIQAVM), 122 to 142 (PLVMGLWSAALMGGGGLGAAI), 153 to 173 (WYQTLAWWALPAVVALFAWWW), 204 to 224 (YFGLINGGYASLIAWLPAFYI), 235 to 255 (SLLALMTLGQAAGALLMPAMA), 263 to 283 (LLMLALVLQLVGFCGFIWLPM), 287 to 307 (VLWAMVCGLGLGGAFPLCLLL), 322 to 342 (VAFMQGIGFIIAGLAPWFSGV), and 354 to 374 (WAFHALCVVGLMIITLRFAPV).

This sequence belongs to the major facilitator superfamily. Cyanate porter (TC 2.A.1.17) family.

The protein resides in the cell inner membrane. In terms of biological role, this protein is part of an active transport system that transports exogenous cyanate into E.coli cells. This is Cyanate transport protein CynX (cynX) from Escherichia coli (strain K12).